A 177-amino-acid chain; its full sequence is Large ribosomal subunit protein uL6 (177 aa).

The protein belongs to the universal ribosomal protein uL6 family. As to quaternary structure, part of the 50S ribosomal subunit.

This protein binds to the 23S rRNA, and is important in its secondary structure. It is located near the subunit interface in the base of the L7/L12 stalk, and near the tRNA binding site of the peptidyltransferase center. This is Large ribosomal subunit protein uL6 from Rickettsia bellii (strain OSU 85-389).